The primary structure comprises 167 residues: Low molecular mass early light-inducible protein HV60, chloroplastic (167 aa).

The transit peptide at 1 to 33 (MATMMAMSSFAGAAVLPRGSARSLPALGRRTLV) directs the protein to the chloroplast. 2 helical membrane-spanning segments follow: residues 101–121 (GQAWFAYTVAMLSMASLVPLL) and 145–165 (FAMIGLVALAATEIITGTPFI).

It belongs to the ELIP/psbS family.

Its subcellular location is the plastid. It is found in the chloroplast membrane. Its function is as follows. Probably involved in the integration of pigments into the mature pigment-protein complexes. In Hordeum vulgare (Barley), this protein is Low molecular mass early light-inducible protein HV60, chloroplastic.